The chain runs to 609 residues: Pentatricopeptide repeat-containing protein At1g03540 (609 aa).

PPR repeat units follow at residues 25–59, 60–94, 95–126, 127–161, 162–196, 197–227, 228–263, 264–298, 299–329, 330–364, 396–426, 427–461, 462–497, and 498–532; these read SAPTKQSRILELCKLGQLTEAIRILNSTHSSEIPA, TPKLYASLLQTCNKVFSFIHGIQFHAHVVKSGLET, DRNVGNSLLSLYFKLGPGMRETRRVFDGRFVK, DAISWTSMMSGYVTGKEHVKALEVFVEMVSFGLDA, NEFTLSSAVKACSELGEVRLGRCFHGVVITHGFEW, NHFISSTLAYLYGVNREPVDARRVFDEMPEP, DVICWTAVLSAFSKNDLYEEALGLFYAMHRGKGLVP, DGSTFGTVLTACGNLRRLKQGKEIHGKLITNGIGS, NVVVESSLLDMYGKCGSVREARQVFNGMSKK, NSVSWSALLGGYCQNGEHEKAIEIFREMEEKDLYC, NVIVESALIDLYGKSGCIDSASRVYSKMSIR, NMITWNAMLSALAQNGRGEEAVSFFNDMVKKGIKP, DYISFIAILTACGHTGMVDEGRNYFVLMAKSYGIKP, and GTEHYSCMIDLLGRAGLFEEAENLLERAECRNDAS. Residues 533 to 609 are type E motif; it reads LWGVLLGPCA…TVGQSWIDAH (77 aa).

It belongs to the PPR family. PCMP-E subfamily.

The polypeptide is Pentatricopeptide repeat-containing protein At1g03540 (PCMP-E4) (Arabidopsis thaliana (Mouse-ear cress)).